Reading from the N-terminus, the 84-residue chain is Putative UPF0320 protein YNL337W (84 aa).

It belongs to the UPF0320 family.

The polypeptide is Putative UPF0320 protein YNL337W (Saccharomyces cerevisiae (strain ATCC 204508 / S288c) (Baker's yeast)).